Here is a 280-residue protein sequence, read N- to C-terminus: Probable endonuclease 4 (280 aa).

Positions 69, 109, 145, 179, 182, 216, 229, 231, and 261 each coordinate Zn(2+).

It belongs to the AP endonuclease 2 family. The cofactor is Zn(2+).

The catalysed reaction is Endonucleolytic cleavage to 5'-phosphooligonucleotide end-products.. Endonuclease IV plays a role in DNA repair. It cleaves phosphodiester bonds at apurinic or apyrimidinic (AP) sites, generating a 3'-hydroxyl group and a 5'-terminal sugar phosphate. The protein is Probable endonuclease 4 of Photorhabdus laumondii subsp. laumondii (strain DSM 15139 / CIP 105565 / TT01) (Photorhabdus luminescens subsp. laumondii).